The sequence spans 689 residues: Glycine--tRNA ligase beta subunit (689 aa).

The protein belongs to the class-II aminoacyl-tRNA synthetase family. Tetramer of two alpha and two beta subunits.

It is found in the cytoplasm. The enzyme catalyses tRNA(Gly) + glycine + ATP = glycyl-tRNA(Gly) + AMP + diphosphate. The protein is Glycine--tRNA ligase beta subunit of Shewanella piezotolerans (strain WP3 / JCM 13877).